The chain runs to 461 residues: Asparagine--tRNA ligase (461 aa).

The protein belongs to the class-II aminoacyl-tRNA synthetase family. In terms of assembly, homodimer.

The protein localises to the cytoplasm. The enzyme catalyses tRNA(Asn) + L-asparagine + ATP = L-asparaginyl-tRNA(Asn) + AMP + diphosphate + H(+). This is Asparagine--tRNA ligase from Nitratidesulfovibrio vulgaris (strain DP4) (Desulfovibrio vulgaris).